A 375-amino-acid polypeptide reads, in one-letter code: Alpha-2,8-sialyltransferase 8B (375 aa).

Residues 1-6 (MQLQFR) lie on the Cytoplasmic side of the membrane. Residues 7–23 (SWMLAALTLLVVFLIFA) traverse the membrane as a helical; Signal-anchor for type II membrane protein segment. The Lumenal portion of the chain corresponds to 24 to 375 (DISEIEEEIG…LTVGQCDGAT (352 aa)). 4 N-linked (GlcNAc...) asparagine glycosylation sites follow: asparagine 60, asparagine 72, asparagine 89, and asparagine 134. 2 disulfide bridges follow: cysteine 157-cysteine 307 and cysteine 171-cysteine 371. 2 residues coordinate CMP-N-acetyl-beta-neuraminate: asparagine 162 and asparagine 185. Residues asparagine 219 and asparagine 234 are each glycosylated (N-linked (GlcNAc...) asparagine). Residues threonine 294, threonine 295, glycine 296, tryptophan 316, tyrosine 329, and histidine 330 each contribute to the CMP-N-acetyl-beta-neuraminate site. Residue histidine 346 is the Proton donor/acceptor of the active site.

The protein belongs to the glycosyltransferase 29 family. In terms of processing, autopolysialylated. Autopolysialylation is not a prerequisite for the polysialylation acitity, but enhances the polysialylation acitity. Highly expressed in fetal brain, kidney and heart and to a much lesser extent in adult heart and thymus.

The protein localises to the golgi apparatus membrane. The protein resides in the secreted. It localises to the cell membrane. The enzyme catalyses [N-acetyl-alpha-D-neuraminosyl-(2-&gt;8)](n) + CMP-N-acetyl-beta-neuraminate = [N-acetyl-alpha-D-neuraminosyl-(2-&gt;8)](n+1) + CMP + H(+). The protein operates within protein modification; protein glycosylation. In terms of biological role, catalyzes the transfer of a sialic acid from a CMP-linked sialic acid donor onto a terminal alpha-2,3-, alpha-2,6-, or alpha-2,8-linked sialic acid of an N-linked glycan acceptor through alpha-2,8-linkages. Therefore, participates in polysialic acid synthesis on various sialylated N-acetyllactosaminyl oligosaccharides (alpha-2,3-, alpha-2,6-, or alpha-2,8-linked sialic acid), including NCAM1, NCAM1 N-glycans, FETUB N-glycans, and to a lesser extent sialylparagloboside (SPG) and AHSG, which does not require the initial addition of an alpha 2,8-sialic acid. However, does not exhibit sialic acid-polymerase activity. Catalyzes polysialic acid synthesis in the hippocampal on NCAM1 and supports neurite outgrowth. ST8SIA2-mediated polysialylation influences on oligodendrocyte differentiation and may promote the integrity of myelin and axons. In Homo sapiens (Human), this protein is Alpha-2,8-sialyltransferase 8B.